Reading from the N-terminus, the 321-residue chain is Peroxidase 27 (321 aa).

Positions 1-23 (MAASKRLVVSCLFLVLLFAQANS) are cleaved as a signal peptide. Disulfide bonds link C35-C113, C68-C73, C119-C317, and C196-C228. Catalysis depends on H66, which acts as the Proton acceptor. Ca(2+)-binding residues include D67, V70, G72, D74, and S76. Substrate is bound at residue P159. N-linked (GlcNAc...) asparagine glycosylation is present at N164. Heme b is bound at residue H189. T190 lines the Ca(2+) pocket. N205 carries N-linked (GlcNAc...) asparagine glycosylation. Residues D240, S243, and D248 each contribute to the Ca(2+) site.

It belongs to the peroxidase family. Classical plant (class III) peroxidase subfamily. It depends on heme b as a cofactor. Ca(2+) is required as a cofactor. In terms of tissue distribution, expressed in the whole plant, but preferentially in roots and flowers.

It localises to the secreted. The enzyme catalyses 2 a phenolic donor + H2O2 = 2 a phenolic radical donor + 2 H2O. Its function is as follows. Removal of H(2)O(2), oxidation of toxic reductants, biosynthesis and degradation of lignin, suberization, auxin catabolism, response to environmental stresses such as wounding, pathogen attack and oxidative stress. These functions might be dependent on each isozyme/isoform in each plant tissue. This is Peroxidase 27 (PER27) from Arabidopsis thaliana (Mouse-ear cress).